The chain runs to 230 residues: 7-cyano-7-deazaguanine synthase (230 aa).

7–17 (CSGGLDSVSLA) is a binding site for ATP. Positions 185, 193, 196, and 199 each coordinate Zn(2+).

The protein belongs to the QueC family. The cofactor is Zn(2+).

It catalyses the reaction 7-carboxy-7-deazaguanine + NH4(+) + ATP = 7-cyano-7-deazaguanine + ADP + phosphate + H2O + H(+). The protein operates within purine metabolism; 7-cyano-7-deazaguanine biosynthesis. In terms of biological role, catalyzes the ATP-dependent conversion of 7-carboxy-7-deazaguanine (CDG) to 7-cyano-7-deazaguanine (preQ(0)). The chain is 7-cyano-7-deazaguanine synthase from Ruegeria pomeroyi (strain ATCC 700808 / DSM 15171 / DSS-3) (Silicibacter pomeroyi).